Here is a 588-residue protein sequence, read N- to C-terminus: L-fucose isomerase (588 aa).

Residues glutamate 335 and aspartate 359 each act as proton acceptor in the active site. The Mn(2+) site is built by glutamate 335, aspartate 359, and histidine 525.

Belongs to the L-fucose isomerase family. Mn(2+) is required as a cofactor.

The protein localises to the cytoplasm. It carries out the reaction L-fucose = L-fuculose. It functions in the pathway carbohydrate degradation; L-fucose degradation; L-lactaldehyde and glycerone phosphate from L-fucose: step 1/3. Converts the aldose L-fucose into the corresponding ketose L-fuculose. The protein is L-fucose isomerase of Streptococcus pneumoniae serotype 4 (strain ATCC BAA-334 / TIGR4).